The chain runs to 213 residues: Ribosomal RNA large subunit methyltransferase E (213 aa).

S-adenosyl-L-methionine contacts are provided by Gly60, Trp62, Asp80, Asp96, and Asp121. The active-site Proton acceptor is the Lys161.

This sequence belongs to the class I-like SAM-binding methyltransferase superfamily. RNA methyltransferase RlmE family.

It localises to the cytoplasm. It catalyses the reaction uridine(2552) in 23S rRNA + S-adenosyl-L-methionine = 2'-O-methyluridine(2552) in 23S rRNA + S-adenosyl-L-homocysteine + H(+). In terms of biological role, specifically methylates the uridine in position 2552 of 23S rRNA at the 2'-O position of the ribose in the fully assembled 50S ribosomal subunit. This Xylella fastidiosa (strain M23) protein is Ribosomal RNA large subunit methyltransferase E.